Here is a 77-residue protein sequence, read N- to C-terminus: Integrin beta-2 (77 aa).

C36 and C43 are oxidised to a cystine. N-linked (GlcNAc...) asparagine glycosylation is present at N54.

It belongs to the integrin beta chain family. Dimer of an alpha and beta subunit.

Its subcellular location is the membrane. Functionally, integrins are a large family of cell surface glycoproteins that mediate cell to cell and cell to matrix adhesion. This chain is Integrin beta-2 (itgb2), found in Xenopus laevis (African clawed frog).